The following is a 171-amino-acid chain: Probable chorismate pyruvate-lyase (171 aa).

4 residues coordinate substrate: Met36, Arg78, Leu116, and Glu157.

This sequence belongs to the UbiC family.

The protein localises to the cytoplasm. It catalyses the reaction chorismate = 4-hydroxybenzoate + pyruvate. The protein operates within cofactor biosynthesis; ubiquinone biosynthesis. In terms of biological role, removes the pyruvyl group from chorismate, with concomitant aromatization of the ring, to provide 4-hydroxybenzoate (4HB) for the ubiquinone pathway. The polypeptide is Probable chorismate pyruvate-lyase (Bartonella bacilliformis (strain ATCC 35685 / KC583 / Herrer 020/F12,63)).